The primary structure comprises 513 residues: ATP synthase subunit alpha (513 aa).

169 to 176 contacts ATP; it reads GDRQTGKT.

This sequence belongs to the ATPase alpha/beta chains family. In terms of assembly, F-type ATPases have 2 components, CF(1) - the catalytic core - and CF(0) - the membrane proton channel. CF(1) has five subunits: alpha(3), beta(3), gamma(1), delta(1), epsilon(1). CF(0) has three main subunits: a(1), b(2) and c(9-12). The alpha and beta chains form an alternating ring which encloses part of the gamma chain. CF(1) is attached to CF(0) by a central stalk formed by the gamma and epsilon chains, while a peripheral stalk is formed by the delta and b chains.

Its subcellular location is the cell inner membrane. The catalysed reaction is ATP + H2O + 4 H(+)(in) = ADP + phosphate + 5 H(+)(out). In terms of biological role, produces ATP from ADP in the presence of a proton gradient across the membrane. The alpha chain is a regulatory subunit. The polypeptide is ATP synthase subunit alpha (Thioalkalivibrio sulfidiphilus (strain HL-EbGR7)).